Here is a 467-residue protein sequence, read N- to C-terminus: ATP synthase subunit beta (467 aa).

152-159 is a binding site for ATP; it reads GGAGVGKT.

It belongs to the ATPase alpha/beta chains family. As to quaternary structure, F-type ATPases have 2 components, CF(1) - the catalytic core - and CF(0) - the membrane proton channel. CF(1) has five subunits: alpha(3), beta(3), gamma(1), delta(1), epsilon(1). CF(0) has three main subunits: a(1), b(2) and c(9-12). The alpha and beta chains form an alternating ring which encloses part of the gamma chain. CF(1) is attached to CF(0) by a central stalk formed by the gamma and epsilon chains, while a peripheral stalk is formed by the delta and b chains.

It is found in the cell inner membrane. It carries out the reaction ATP + H2O + 4 H(+)(in) = ADP + phosphate + 5 H(+)(out). In terms of biological role, produces ATP from ADP in the presence of a proton gradient across the membrane. The catalytic sites are hosted primarily by the beta subunits. This chain is ATP synthase subunit beta, found in Wolinella succinogenes (strain ATCC 29543 / DSM 1740 / CCUG 13145 / JCM 31913 / LMG 7466 / NCTC 11488 / FDC 602W) (Vibrio succinogenes).